The sequence spans 160 residues: Phosphopantetheine adenylyltransferase (160 aa).

Residue Ser-10 participates in substrate binding. Residues 10–11 (SF) and His-18 contribute to the ATP site. Residues Lys-42, Thr-74, and Arg-88 each coordinate substrate. Residues 89-91 (GLR), Glu-99, and 124-130 (YSFVSST) contribute to the ATP site.

This sequence belongs to the bacterial CoaD family. Homohexamer. Mg(2+) serves as cofactor.

It is found in the cytoplasm. It catalyses the reaction (R)-4'-phosphopantetheine + ATP + H(+) = 3'-dephospho-CoA + diphosphate. It functions in the pathway cofactor biosynthesis; coenzyme A biosynthesis; CoA from (R)-pantothenate: step 4/5. Its function is as follows. Reversibly transfers an adenylyl group from ATP to 4'-phosphopantetheine, yielding dephospho-CoA (dPCoA) and pyrophosphate. The chain is Phosphopantetheine adenylyltransferase from Leptospira biflexa serovar Patoc (strain Patoc 1 / Ames).